The sequence spans 155 residues: Small ribosomal subunit protein uS7c (155 aa).

This sequence belongs to the universal ribosomal protein uS7 family. In terms of assembly, part of the 30S ribosomal subunit.

The protein localises to the plastid. Its subcellular location is the chloroplast. Its function is as follows. One of the primary rRNA binding proteins, it binds directly to 16S rRNA where it nucleates assembly of the head domain of the 30S subunit. This is Small ribosomal subunit protein uS7c (rps7) from Euonymus alatus (Burning bush).